A 135-amino-acid chain; its full sequence is ATP synthase epsilon chain (135 aa).

This sequence belongs to the ATPase epsilon chain family. As to quaternary structure, F-type ATPases have 2 components, CF(1) - the catalytic core - and CF(0) - the membrane proton channel. CF(1) has five subunits: alpha(3), beta(3), gamma(1), delta(1), epsilon(1). CF(0) has three main subunits: a, b and c.

The protein localises to the cell inner membrane. Its function is as follows. Produces ATP from ADP in the presence of a proton gradient across the membrane. This Rhodopseudomonas palustris (strain BisA53) protein is ATP synthase epsilon chain.